Reading from the N-terminus, the 140-residue chain is Transcription antitermination protein NusB (140 aa).

The protein belongs to the NusB family.

Functionally, involved in transcription antitermination. Required for transcription of ribosomal RNA (rRNA) genes. Binds specifically to the boxA antiterminator sequence of the ribosomal RNA (rrn) operons. This Leptospira biflexa serovar Patoc (strain Patoc 1 / Ames) protein is Transcription antitermination protein NusB.